The chain runs to 324 residues: Glyoxylate/hydroxypyruvate reductase B (324 aa).

Residues Arg237 and Glu266 contribute to the active site. His285 serves as the catalytic Proton donor.

The protein belongs to the D-isomer specific 2-hydroxyacid dehydrogenase family. GhrB subfamily. As to quaternary structure, homodimer.

The protein resides in the cytoplasm. The enzyme catalyses glycolate + NADP(+) = glyoxylate + NADPH + H(+). It carries out the reaction (R)-glycerate + NAD(+) = 3-hydroxypyruvate + NADH + H(+). It catalyses the reaction (R)-glycerate + NADP(+) = 3-hydroxypyruvate + NADPH + H(+). In terms of biological role, catalyzes the NADPH-dependent reduction of glyoxylate and hydroxypyruvate into glycolate and glycerate, respectively. This chain is Glyoxylate/hydroxypyruvate reductase B, found in Escherichia coli O6:K15:H31 (strain 536 / UPEC).